The primary structure comprises 156 residues: Small ribosomal subunit protein uS7 (156 aa).

It belongs to the universal ribosomal protein uS7 family. In terms of assembly, part of the 30S ribosomal subunit. Contacts proteins S9 and S11.

One of the primary rRNA binding proteins, it binds directly to 16S rRNA where it nucleates assembly of the head domain of the 30S subunit. Is located at the subunit interface close to the decoding center, probably blocks exit of the E-site tRNA. This is Small ribosomal subunit protein uS7 from Staphylococcus carnosus (strain TM300).